Reading from the N-terminus, the 992-residue chain is Disks large-associated protein 4 (992 aa).

Residues 1–20 (MKGLGDSRPRHLSDSLDPPH) are compositionally biased toward basic and acidic residues. Disordered stretches follow at residues 1–30 (MKGL…TDRN), 47–66 (PGQN…QLPP), and 157–206 (LEGT…GWWS). Over residues 162-171 (GKVGGNGSKK) the composition is skewed to gly residues. The span at 172–194 (GGMEDGKGRRAKSKERAKAGEPK) shows a compositional bias: basic and acidic residues. Residues Ser206 and Ser207 each carry the phosphoserine modification. Arg291 carries the post-translational modification Omega-N-methylarginine. Residues 342–396 (STTLLSPRETDAAAEGPIPCRRMRSGSYIKAMGDEDSDESGGSPKPSPKTAARRQ) form a disordered region. Phosphoserine is present on residues Ser378, Ser381, Ser388, Ser405, Ser415, and Ser421. Disordered stretches follow at residues 527-751 (SVSL…GPRQ), 763-798 (SYGD…AQPG), and 915-992 (TPEK…QTRL). Low complexity predominate over residues 528–554 (VSLQSLSPPPSTGSLSNSRTLPSSSCL). The segment covering 576 to 591 (VTVQSSTESAQDTYLD) has biased composition (polar residues). Phosphoserine occurs at positions 580, 581, 609, 611, 665, and 744. Low complexity predominate over residues 600–620 (TSQSGLSNSSDSLDSSTRPPS). Thr915 carries the phosphothreonine modification. 2 stretches are compositionally biased toward basic and acidic residues: residues 915-925 (TPEKRKEEKKP) and 940-958 (VSRD…EARK). Residues 969–978 (VRQNSATESA) show a composition bias toward polar residues. The residue at position 973 (Ser973) is a Phosphoserine.

Belongs to the SAPAP family. Interacts with DLG1 and DLG4/PSD-95.

It localises to the membrane. May play a role in the molecular organization of synapses and neuronal cell signaling. Could be an adapter protein linking ion channel to the subsynaptic cytoskeleton. May induce enrichment of PSD-95/SAP90 at the plasma membrane. The chain is Disks large-associated protein 4 (DLGAP4) from Homo sapiens (Human).